We begin with the raw amino-acid sequence, 206 residues long: LOB domain-containing protein 2 (206 aa).

Residues 1–20 (MMQRNSNNTSITSNISNNSS) are disordered. Positions 23–123 (QACASCKHQR…KSLVHNQPLI (101 aa)) constitute an LOB domain.

It belongs to the LOB domain-containing protein family.

The sequence is that of LOB domain-containing protein 2 (LBD2) from Arabidopsis thaliana (Mouse-ear cress).